The chain runs to 320 residues: MELLESKPLSAISMVIDSIGVDHDSQNKCNCCNEQIYDRFIYRMDNHSYHENCVKCTICESPLAEKCFWKNGRIYCSQHYYKDHSSHRCAGCKKGVSPTDMVYKLKAGLVFHVECHCCSLCGRHLSPGEQILVDDTMMTVSCMTHYPPQMDDSCGPPAGTSEVPSCSSDSAIAPYPMDEGFPSAFQVKKEVDAYGYNFEHYSFSDFCDDDSRMLKRRGPRTTIKQNQLDVLNEMFSNTPKPSKHARAKKALETGLSMRVIQVWFQNRRSKERRLKHLCNYLRHYEQRGLIPPPIHFRNEEMDTTDFNSFCGNFEEEDDED.

2 consecutive LIM zinc-binding domains span residues Cys-29 to His-79 and Cys-89 to His-145. The segment at residues Arg-216–Lys-275 is a DNA-binding region (homeobox).

The protein resides in the nucleus. Specifies differentiation of the set of six touch receptor neurons. Binds cooperatively as a heterodimer with unc-86 to sites in the mec-3 gene promoter. This Caenorhabditis remanei (Caenorhabditis vulgaris) protein is Mechanosensory protein 3 (mec-3).